The chain runs to 230 residues: 5'-methylthioadenosine/S-adenosylhomocysteine nucleosidase (230 aa).

Glu12 functions as the Proton acceptor in the catalytic mechanism. Substrate-binding positions include Gly78, Ile153, and 174 to 175 (ME). Asp198 functions as the Proton donor in the catalytic mechanism.

This sequence belongs to the PNP/UDP phosphorylase family. MtnN subfamily.

The enzyme catalyses S-adenosyl-L-homocysteine + H2O = S-(5-deoxy-D-ribos-5-yl)-L-homocysteine + adenine. It carries out the reaction S-methyl-5'-thioadenosine + H2O = 5-(methylsulfanyl)-D-ribose + adenine. It catalyses the reaction 5'-deoxyadenosine + H2O = 5-deoxy-D-ribose + adenine. It participates in amino-acid biosynthesis; L-methionine biosynthesis via salvage pathway; S-methyl-5-thio-alpha-D-ribose 1-phosphate from S-methyl-5'-thioadenosine (hydrolase route): step 1/2. Catalyzes the irreversible cleavage of the glycosidic bond in both 5'-methylthioadenosine (MTA) and S-adenosylhomocysteine (SAH/AdoHcy) to adenine and the corresponding thioribose, 5'-methylthioribose and S-ribosylhomocysteine, respectively. Also cleaves 5'-deoxyadenosine, a toxic by-product of radical S-adenosylmethionine (SAM) enzymes, into 5-deoxyribose and adenine. The protein is 5'-methylthioadenosine/S-adenosylhomocysteine nucleosidase of Shewanella denitrificans (strain OS217 / ATCC BAA-1090 / DSM 15013).